Here is a 315-residue protein sequence, read N- to C-terminus: Ribosomal RNA small subunit methyltransferase H (315 aa).

Residues 33–35 (GGH), aspartate 52, phenylalanine 84, aspartate 106, and glutamine 113 each bind S-adenosyl-L-methionine. Residues 294-315 (SSDELEENNRSHSAKLRVAEKL) are disordered.

This sequence belongs to the methyltransferase superfamily. RsmH family.

The protein resides in the cytoplasm. The catalysed reaction is cytidine(1402) in 16S rRNA + S-adenosyl-L-methionine = N(4)-methylcytidine(1402) in 16S rRNA + S-adenosyl-L-homocysteine + H(+). Functionally, specifically methylates the N4 position of cytidine in position 1402 (C1402) of 16S rRNA. In Lactobacillus johnsonii (strain CNCM I-12250 / La1 / NCC 533), this protein is Ribosomal RNA small subunit methyltransferase H.